Here is a 628-residue protein sequence, read N- to C-terminus: DNA-directed RNA polymerase subunit gamma (628 aa).

4 residues coordinate Zn(2+): C71, C73, C86, and C89. Mg(2+) is bound by residues D467, D469, and D471.

This sequence belongs to the RNA polymerase beta' chain family. RpoC1 subfamily. As to quaternary structure, in cyanobacteria the RNAP catalytic core is composed of 2 alpha, 1 beta, 1 beta', 1 gamma and 1 omega subunit. When a sigma factor is associated with the core the holoenzyme is formed, which can initiate transcription. Requires Mg(2+) as cofactor. Zn(2+) is required as a cofactor.

The enzyme catalyses RNA(n) + a ribonucleoside 5'-triphosphate = RNA(n+1) + diphosphate. Functionally, DNA-dependent RNA polymerase catalyzes the transcription of DNA into RNA using the four ribonucleoside triphosphates as substrates. The sequence is that of DNA-directed RNA polymerase subunit gamma from Crocosphaera subtropica (strain ATCC 51142 / BH68) (Cyanothece sp. (strain ATCC 51142)).